We begin with the raw amino-acid sequence, 275 residues long: Nurim (275 aa).

At 1–4 (MASV) the chain is on the nuclear side. A helical membrane pass occupies residues 5-32 (TFRDGFLCVSALITFVFVFVTGADFVRF). The Perinuclear space segment spans residues 33-63 (VSFRAINHNLSGAAPLCRDSVPWSVALRDGV). A helical transmembrane segment spans residues 64-85 (VQKAVAVDVLLLVVFSLQHSLL). Residues 86 to 102 (AWTPVKRVCQSVFGVLS) lie on the Nuclear side of the membrane. A helical membrane pass occupies residues 103-119 (RSVYCFTTAAALQILMH). At 120–138 (YWRPVTSAPCLWSVSSAPW) the chain is on the perinuclear space side. Residues 139-169 (EIWFPLICFIVHFLCWAIICSILLIFDYPEL) traverse the membrane as a helical segment. Residues 170–196 (LGIKQVYYECLGLGDPLLLKSERAQRL) are Nuclear-facing. The helical transmembrane segment at 197–215 (YSHLRHPVCVELLTVLWLL) threads the bilayer. The Perinuclear space portion of the chain corresponds to 216–221 (PSFPLD). Residues 222–239 (RLLLAVFLTVYLILAHSL) traverse the membrane as a helical segment. Residues 240–275 (DKQDCAYLRHQLRNKLQLFSTPLEGSEQTNDNNKLE) lie on the Nuclear side of the membrane.

It belongs to the nurim family.

The protein localises to the nucleus inner membrane. The sequence is that of Nurim (nrm) from Danio rerio (Zebrafish).